Reading from the N-terminus, the 159-residue chain is Eukaryotic translation initiation factor 5A-2 (159 aa).

Residues 1-10 are compositionally biased toward basic and acidic residues; it reads MSDDEHHFEA. The tract at residues 1-25 is disordered; the sequence is MSDDEHHFEASESGASKTYPQSAGN. At Ser2 the chain carries Phosphoserine. Polar residues predominate over residues 13–24; it reads SGASKTYPQSAG. Lys51 carries the hypusine modification.

The protein belongs to the eIF-5A family. In terms of assembly, homodimer. Interacts with AHK4 and AHP1. Cytokinin regulates the formation of the AHP1-AHK4-ELF5A-2 complex. Lys-51 undergoes hypusination, a unique post-translational modification that consists in the addition of a butylamino group from spermidine to lysine side chain, leading to the formation of the unusual amino acid hypusine. eIF-5As are the only known proteins to undergo this modification, which is essential for their function. Ubiquitous. In roots, expressed mostly inside the stele of the mature zone.

It localises to the cytoplasm. It is found in the nucleus. Translation factor that promotes translation elongation and termination, particularly upon ribosome stalling at specific amino acid sequence contexts. Binds between the exit (E) and peptidyl (P) site of the ribosome and promotes rescue of stalled ribosome: specifically required for efficient translation of polyproline-containing peptides as well as other motifs that stall the ribosome. Acts as a ribosome quality control (RQC) cofactor by joining the RQC complex to facilitate peptidyl transfer during CAT tailing step. Regulates cytokinin-mediated root protoxylem specification and represses secifically the expression of AHP6. Regulates the induction of programmed cell death caused by infection with virulent pathogen. In Arabidopsis thaliana (Mouse-ear cress), this protein is Eukaryotic translation initiation factor 5A-2 (ELF5A-2).